We begin with the raw amino-acid sequence, 139 residues long: Exodeoxyribonuclease 7 small subunit (139 aa).

2 disordered regions span residues 1–26 (MAKK…LGDF) and 82–139 (DAEG…EDDE). Over residues 130–139 (ADLDSAEDDE) the composition is skewed to acidic residues.

Belongs to the XseB family. In terms of assembly, heterooligomer composed of large and small subunits.

The protein resides in the cytoplasm. It carries out the reaction Exonucleolytic cleavage in either 5'- to 3'- or 3'- to 5'-direction to yield nucleoside 5'-phosphates.. Functionally, bidirectionally degrades single-stranded DNA into large acid-insoluble oligonucleotides, which are then degraded further into small acid-soluble oligonucleotides. This Rhodopirellula baltica (strain DSM 10527 / NCIMB 13988 / SH1) protein is Exodeoxyribonuclease 7 small subunit.